We begin with the raw amino-acid sequence, 382 residues long: Prophage ps2 probable integrase (382 aa).

A Core-binding (CB) domain is found at 63–142 (AKFTDIAEEW…TLNLIFDYAV (80 aa)). The Tyr recombinase domain maps to 170–376 (IQNKYLEQNE…TENMKSSIID (207 aa)). Active-site residues include R209, K242, H326, R329, and H352. Y363 functions as the O-(3'-phospho-DNA)-tyrosine intermediate in the catalytic mechanism.

Belongs to the 'phage' integrase family.

The protein is Prophage ps2 probable integrase (ps201) of Lactococcus lactis subsp. lactis (strain IL1403) (Streptococcus lactis).